The sequence spans 94 residues: uncharacterized protein (94 aa).

Belongs to the phD/YefM antitoxin family.

This is an uncharacterized protein from Synechocystis sp. (strain ATCC 27184 / PCC 6803 / Kazusa).